The following is a 104-amino-acid chain: Inner membrane protein YjeO (104 aa).

Residues 1–5 (MSARM) lie on the Cytoplasmic side of the membrane. Residues 6–26 (FVLCCIWFIVAFLWITITSAL) traverse the membrane as a helical segment. Residues 27 to 52 (DKEWMIDGRGINNVCDVLMYLEEDDT) lie on the Periplasmic side of the membrane. The helical transmembrane segment at 53-73 (RDVGVIMTLPLFFPFLWFALW) threads the bilayer. Topologically, residues 74 to 77 (RKKR) are cytoplasmic. The helical transmembrane segment at 78-98 (GWFMYATALAIFGYWLWQFFL) threads the bilayer. The Periplasmic portion of the chain corresponds to 99–104 (RYQFCL).

It is found in the cell inner membrane. The protein is Inner membrane protein YjeO (yjeO) of Escherichia coli (strain K12).